A 425-amino-acid polypeptide reads, in one-letter code: Polycomb protein esc (425 aa).

Residues 1-10 (MSSDKVKNGN) show a composition bias toward basic and acidic residues. The disordered stretch occupies residues 1-64 (MSSDKVKNGN…KPKSRAAYKY (64 aa)). Residues 11–20 (EPEESEESCG) are compositionally biased toward acidic residues. Residue Ser-15 is modified to Phosphoserine. The segment covering 21–42 (DESASYTTNSTTSRSKSPSSST) has biased composition (low complexity). Over residues 43–60 (RSKRRGRRSTKSKPKSRA) the composition is skewed to basic residues. WD repeat units follow at residues 71–114 (NHGA…GMQL), 126–165 (VFYT…AVGN), 168–208 (GHGQ…CIAI), 214–253 (GHRD…FHHK), 284–321 (IHRN…QSFE), 340–379 (ECEI…PEGA), and 388–424 (RSVA…QTTS).

It belongs to the WD repeat ESC family. As to quaternary structure, component of the polycomb repressive complex 2 (PRC2, also known as the Esc/E(Z) complex), composed of Caf1-55, esc, E(z), Su(z)12, and possibly pho. PRC2 associates with the accessory components Jarid2 and jing to form the PRC2 Jarid2-jing variant (PRC2.2). PRC2 may also associate with Pcl and HDAC1/Rpd3 during early embryogenesis. This complex is distinct from the PRC1 complex, which contains many other PcG proteins like Pc, Ph, Psc, Su(z)2. The two complexes however cooperate and interact together during the first 3 hours of development to establish PcG silencing. Interacts with corto in vitro. Widely expressed.

Its subcellular location is the nucleus. Its function is as follows. Polycomb group (PcG) protein. While PcG proteins are generally required to maintain the transcriptionally repressive state of homeotic genes throughout development, this protein is specifically required during the first 6 hours of embryogenesis to establish the repressed state. Component of the Esc/E(z) complex, which methylates 'Lys-9' and 'Lys-27' residues of histone H3, leading to transcriptional repression of the affected target gene. The Esc/E(z) complex is necessary but not sufficient for the repression of homeotic target genes, suggesting that the recruitment of the distinct PRC1 complex is also required. This Drosophila melanogaster (Fruit fly) protein is Polycomb protein esc (esc).